A 347-amino-acid polypeptide reads, in one-letter code: NADH-ubiquinone oxidoreductase chain 2 (347 aa).

10 consecutive transmembrane segments (helical) span residues 1-21 (MTPMTTLIMLFSLLLGTTLTL), 26-46 (WLLMWMGLEVSTLAIIPLLTY), 56-76 (AIKYFLTQATASMLLMFAASL), 96-116 (GIMTFALAMKLGLAPFHYWVP), 153-171 (ILLTLAISSTLLGGWNGLN), 178-198 (VMAYSSIAHMGWMVLIIIYFP), 199-219 (TLTTLNLTLYIMSTVALFTVF), 237-257 (APIMTLAIILLLLSLGGLPPL), 277-297 (IMATVLAITALLNLFFYMRII), and 326-346 (LPTLVILSTTLLPLTPMFITL).

This sequence belongs to the complex I subunit 2 family. Core subunit of respiratory chain NADH dehydrogenase (Complex I) which is composed of 45 different subunits. Interacts with TMEM242.

It localises to the mitochondrion inner membrane. It catalyses the reaction a ubiquinone + NADH + 5 H(+)(in) = a ubiquinol + NAD(+) + 4 H(+)(out). In terms of biological role, core subunit of the mitochondrial membrane respiratory chain NADH dehydrogenase (Complex I) which catalyzes electron transfer from NADH through the respiratory chain, using ubiquinone as an electron acceptor. Essential for the catalytic activity and assembly of complex I. The protein is NADH-ubiquinone oxidoreductase chain 2 of Ornithorhynchus anatinus (Duckbill platypus).